The sequence spans 272 residues: 3-methyl-2-oxobutanoate hydroxymethyltransferase (272 aa).

Asp52 and Asp91 together coordinate Mg(2+). Residues 52-53 (DS), Asp91, and Lys121 contribute to the 3-methyl-2-oxobutanoate site. Glu123 provides a ligand contact to Mg(2+). Residue Glu190 is the Proton acceptor of the active site.

It belongs to the PanB family. In terms of assembly, homodecamer; pentamer of dimers. The cofactor is Mg(2+).

It is found in the cytoplasm. The enzyme catalyses 3-methyl-2-oxobutanoate + (6R)-5,10-methylene-5,6,7,8-tetrahydrofolate + H2O = 2-dehydropantoate + (6S)-5,6,7,8-tetrahydrofolate. Its pathway is cofactor biosynthesis; (R)-pantothenate biosynthesis; (R)-pantoate from 3-methyl-2-oxobutanoate: step 1/2. Catalyzes the reversible reaction in which hydroxymethyl group from 5,10-methylenetetrahydrofolate is transferred onto alpha-ketoisovalerate to form ketopantoate. The protein is 3-methyl-2-oxobutanoate hydroxymethyltransferase of Cytophaga hutchinsonii (strain ATCC 33406 / DSM 1761 / CIP 103989 / NBRC 15051 / NCIMB 9469 / D465).